A 156-amino-acid polypeptide reads, in one-letter code: Cyanate hydratase (156 aa).

Catalysis depends on residues Arg96, Glu99, and Ser122.

This sequence belongs to the cyanase family.

It catalyses the reaction cyanate + hydrogencarbonate + 3 H(+) = NH4(+) + 2 CO2. Functionally, catalyzes the reaction of cyanate with bicarbonate to produce ammonia and carbon dioxide. This Pseudomonas aeruginosa (strain UCBPP-PA14) protein is Cyanate hydratase.